The sequence spans 314 residues: Probable manganese-dependent inorganic pyrophosphatase (314 aa).

Mn(2+)-binding residues include His-7, Asp-11, Asp-13, Asp-72, His-94, and Asp-146.

The protein belongs to the PPase class C family. Requires Mn(2+) as cofactor.

The protein resides in the cytoplasm. It catalyses the reaction diphosphate + H2O = 2 phosphate + H(+). The chain is Probable manganese-dependent inorganic pyrophosphatase (ppaC) from Deinococcus radiodurans (strain ATCC 13939 / DSM 20539 / JCM 16871 / CCUG 27074 / LMG 4051 / NBRC 15346 / NCIMB 9279 / VKM B-1422 / R1).